The sequence spans 82 residues: ATP synthase subunit c, chloroplastic (82 aa).

2 consecutive transmembrane segments (helical) span residues Ile4 to Pro24 and Leu57 to Ala77.

Belongs to the ATPase C chain family. As to quaternary structure, F-type ATPases have 2 components, F(1) - the catalytic core - and F(0) - the membrane proton channel. F(1) has five subunits: alpha(3), beta(3), gamma(1), delta(1), epsilon(1). F(0) has four main subunits: a(1), b(1), b'(1) and c(10-14). The alpha and beta chains form an alternating ring which encloses part of the gamma chain. F(1) is attached to F(0) by a central stalk formed by the gamma and epsilon chains, while a peripheral stalk is formed by the delta, b and b' chains.

The protein resides in the plastid. Its subcellular location is the chloroplast thylakoid membrane. In terms of biological role, f(1)F(0) ATP synthase produces ATP from ADP in the presence of a proton or sodium gradient. F-type ATPases consist of two structural domains, F(1) containing the extramembraneous catalytic core and F(0) containing the membrane proton channel, linked together by a central stalk and a peripheral stalk. During catalysis, ATP synthesis in the catalytic domain of F(1) is coupled via a rotary mechanism of the central stalk subunits to proton translocation. Key component of the F(0) channel; it plays a direct role in translocation across the membrane. A homomeric c-ring of between 10-14 subunits forms the central stalk rotor element with the F(1) delta and epsilon subunits. This chain is ATP synthase subunit c, chloroplastic, found in Heterosigma akashiwo (strain NIES-293 / 8280G21-1).